A 297-amino-acid polypeptide reads, in one-letter code: Light-independent protochlorophyllide reductase iron-sulfur ATP-binding protein (297 aa).

ATP contacts are provided by residues 41 to 46 and K70; that span reads GIGKST. Residue S45 participates in Mg(2+) binding. [4Fe-4S] cluster contacts are provided by C126 and C160. Residues 211–212 and 235–237 each bind ATP; these read NR and PDL.

The protein belongs to the NifH/BchL/ChlL family. As to quaternary structure, homodimer. Protochlorophyllide reductase is composed of three subunits; BchL, BchN and BchB. [4Fe-4S] cluster serves as cofactor.

It catalyses the reaction chlorophyllide a + oxidized 2[4Fe-4S]-[ferredoxin] + 2 ADP + 2 phosphate = protochlorophyllide a + reduced 2[4Fe-4S]-[ferredoxin] + 2 ATP + 2 H2O. The protein operates within porphyrin-containing compound metabolism; bacteriochlorophyll biosynthesis (light-independent). Its function is as follows. Component of the dark-operative protochlorophyllide reductase (DPOR) that uses Mg-ATP and reduced ferredoxin to reduce ring D of protochlorophyllide (Pchlide) to form chlorophyllide a (Chlide). This reaction is light-independent. The L component serves as a unique electron donor to the NB-component of the complex, and binds Mg-ATP. The sequence is that of Light-independent protochlorophyllide reductase iron-sulfur ATP-binding protein from Methylorubrum populi (strain ATCC BAA-705 / NCIMB 13946 / BJ001) (Methylobacterium populi).